The primary structure comprises 129 residues: Glycine cleavage system H protein (129 aa).

The Lipoyl-binding domain occupies 24–106 (TYTVGITEHA…YTDGWIFKIK (83 aa)). Lys65 carries the post-translational modification N6-lipoyllysine.

Belongs to the GcvH family. As to quaternary structure, the glycine cleavage system is composed of four proteins: P, T, L and H. (R)-lipoate serves as cofactor.

Functionally, the glycine cleavage system catalyzes the degradation of glycine. The H protein shuttles the methylamine group of glycine from the P protein to the T protein. In Klebsiella pneumoniae subsp. pneumoniae (strain ATCC 700721 / MGH 78578), this protein is Glycine cleavage system H protein.